The primary structure comprises 112 residues: Protein Tat (112 aa).

The interaction with human CREBBP stretch occupies residues 1-24 (MDPVDPEMPPWHHPGSKPQTPCNN). A transactivation region spans residues 1–48 (MDPVDPEMPPWHHPGSKPQTPCNNCYCKRCCYHCYVCFTKKGLGISHG). Residues C22, C25, and C27 each coordinate Zn(2+). The tract at residues 22 to 37 (CNNCYCKRCCYHCYVC) is cysteine-rich. K28 is modified (N6-acetyllysine; by host PCAF). 4 residues coordinate Zn(2+): C30, H33, C34, and C37. A core region spans residues 38–48 (FTKKGLGISHG). Residues 45–112 (ISHGRKKRRR…CNSCTRISGQ (68 aa)) form a disordered region. Positions 49-56 (RKKRRRPA) match the Nuclear localization signal, RNA-binding (TAR), and protein transduction motif. The interaction with the host capping enzyme RNGTT stretch occupies residues 49-82 (RKKRRRPAAAASYPDNKDPVPEQHTGRKQKRQEE). 2 positions are modified to N6-acetyllysine; by host EP300 and GCN5L2: K50 and K51. Asymmetric dimethylarginine; by host PRMT6 occurs at positions 52 and 53. The segment covering 63 to 91 (DNKDPVPEQHTGRKQKRQEEQEKKVEKET) has biased composition (basic and acidic residues). The segment covering 93 to 112 (PSGQPCHQDSCNSCTRISGQ) has biased composition (polar residues).

Belongs to the lentiviruses Tat family. Interacts with host CCNT1. Associates with the P-TEFb complex composed at least of Tat, P-TEFb (CDK9 and CCNT1), TAR RNA, RNA Pol II. Recruits the HATs CREBBP, TAF1/TFIID, EP300, PCAF and GCN5L2. Interacts with host KAT5/Tip60; this interaction targets the latter to degradation. Interacts with the host deacetylase SIRT1. Interacts with host capping enzyme RNGTT; this interaction stimulates RNGTT. Binds to host KDR, and to the host integrins ITGAV/ITGB3 and ITGA5/ITGB1. Interacts with host KPNB1/importin beta-1 without previous binding to KPNA1/importin alpha-1. Interacts with EIF2AK2. Interacts with host nucleosome assembly protein NAP1L1; this interaction may be required for the transport of Tat within the nucleus, since the two proteins interact at the nuclear rim. Interacts with host C1QBP/SF2P32; this interaction involves lysine-acetylated Tat. Interacts with the host chemokine receptors CCR2, CCR3 and CXCR4. Interacts with host DPP4/CD26; this interaction may trigger an anti-proliferative effect. Interacts with host LDLR. Interacts with the host extracellular matrix metalloproteinase MMP1. Interacts with host PRMT6; this interaction mediates Tat's methylation. Interacts with, and is ubiquitinated by MDM2/Hdm2. Interacts with host PSMC3 and HTATIP2. Interacts with STAB1; this interaction may overcome SATB1-mediated repression of IL2 and IL2RA (interleukin) in T cells by binding to the same domain than HDAC1. Interacts (when acetylated) with human CDK13, thereby increasing HIV-1 mRNA splicing and promoting the production of the doubly spliced HIV-1 protein Nef. Interacts with host TBP; this interaction modulates the activity of transcriptional pre-initiation complex. Interacts with host RELA. Interacts with host PLSCR1; this interaction negatively regulates Tat transactivation activity by altering its subcellular distribution. Post-translationally, asymmetrical arginine methylation by host PRMT6 seems to diminish the transactivation capacity of Tat and affects the interaction with host CCNT1. In terms of processing, acetylation by EP300, CREBBP, GCN5L2/GCN5 and PCAF regulates the transactivation activity of Tat. EP300-mediated acetylation of Lys-50 promotes dissociation of Tat from the TAR RNA through the competitive binding to PCAF's bromodomain. In addition, the non-acetylated Tat's N-terminus can also interact with PCAF. PCAF-mediated acetylation of Lys-28 enhances Tat's binding to CCNT1. Lys-50 is deacetylated by SIRT1. Polyubiquitination by host MDM2 does not target Tat to degradation, but activates its transactivation function and fosters interaction with CCNT1 and TAR RNA. Post-translationally, phosphorylated by EIF2AK2 on serine and threonine residues adjacent to the basic region important for TAR RNA binding and function. Phosphorylation of Tat by EIF2AK2 is dependent on the prior activation of EIF2AK2 by dsRNA.

It is found in the host nucleus. The protein localises to the host nucleolus. The protein resides in the host cytoplasm. It localises to the secreted. Transcriptional activator that increases RNA Pol II processivity, thereby increasing the level of full-length viral transcripts. Recognizes a hairpin structure at the 5'-LTR of the nascent viral mRNAs referred to as the transactivation responsive RNA element (TAR) and recruits the cyclin T1-CDK9 complex (P-TEFb complex) that will in turn hyperphosphorylate the RNA polymerase II to allow efficient elongation. The CDK9 component of P-TEFb and other Tat-activated kinases hyperphosphorylate the C-terminus of RNA Pol II that becomes stabilized and much more processive. Other factors such as HTATSF1/Tat-SF1, SUPT5H/SPT5, and HTATIP2 are also important for Tat's function. Besides its effect on RNA Pol II processivity, Tat induces chromatin remodeling of proviral genes by recruiting the histone acetyltransferases (HATs) CREBBP, EP300 and PCAF to the chromatin. This also contributes to the increase in proviral transcription rate, especially when the provirus integrates in transcriptionally silent region of the host genome. To ensure maximal activation of the LTR, Tat mediates nuclear translocation of NF-kappa-B by interacting with host RELA. Through its interaction with host TBP, Tat may also modulate transcription initiation. Tat can reactivate a latently infected cell by penetrating in it and transactivating its LTR promoter. In the cytoplasm, Tat is thought to act as a translational activator of HIV-1 mRNAs. Its function is as follows. Extracellular circulating Tat can be endocytosed by surrounding uninfected cells via the binding to several surface receptors such as CD26, CXCR4, heparan sulfate proteoglycans (HSPG) or LDLR. Neurons are rarely infected, but they internalize Tat via their LDLR. Through its interaction with nuclear HATs, Tat is potentially able to control the acetylation-dependent cellular gene expression. Modulates the expression of many cellular genes involved in cell survival, proliferation or in coding for cytokines or cytokine receptors. Tat plays a role in T-cell and neurons apoptosis. Tat induced neurotoxicity and apoptosis probably contribute to neuroAIDS. Circulating Tat also acts as a chemokine-like and/or growth factor-like molecule that binds to specific receptors on the surface of the cells, affecting many cellular pathways. In the vascular system, Tat binds to ITGAV/ITGB3 and ITGA5/ITGB1 integrins dimers at the surface of endothelial cells and competes with bFGF for heparin-binding sites, leading to an excess of soluble bFGF. This chain is Protein Tat, found in Homo sapiens (Human).